The sequence spans 270 residues: Checkpoint signal transducer rad25 (270 aa).

2 positions are modified to phosphoserine: serine 234 and serine 253. The interval 240–270 is disordered; the sequence is QSAKEEAPAAAAASENEHPEPKESTTDTVKA. Basic and acidic residues predominate over residues 254–270; that stretch reads ENEHPEPKESTTDTVKA.

This sequence belongs to the 14-3-3 family. As to quaternary structure, interacts with rad24. Interacts with byr2.

Its subcellular location is the cytoplasm. Acts in cell cycle and stress checkpoint signaling by sequestering signal transducers regulated by the checkpoints. Required for the DNA damage checkpoint that ensures that DNA damage is repaired before mitosis is attempted. Sequesters byr2 in the cytoplasm to prevent its translocation to the plasma membrane. The protein is Checkpoint signal transducer rad25 of Schizosaccharomyces pombe (strain 972 / ATCC 24843) (Fission yeast).